We begin with the raw amino-acid sequence, 186 residues long: Cell division protein SepF (186 aa).

A disordered region spans residues 24–91 (EDEEEEERYA…HNPPHLRAVP (68 aa)).

This sequence belongs to the SepF family. In terms of assembly, homodimer. Interacts with FtsZ.

Its subcellular location is the cytoplasm. Cell division protein that is part of the divisome complex and is recruited early to the Z-ring. Probably stimulates Z-ring formation, perhaps through the cross-linking of FtsZ protofilaments. Its function overlaps with FtsA. The chain is Cell division protein SepF from Rubrobacter xylanophilus (strain DSM 9941 / JCM 11954 / NBRC 16129 / PRD-1).